Consider the following 313-residue polypeptide: MLRRPLLLVLFTVFSTLYAKDLRGVSPPTNESEAEVSPGDDEGPPEPGNEPDVNWRTLTIDPEDCKDKGKDCESLADEGNCLKKLNYAVGNCPWTCRFCKKENGDSKKCKDLAGERHCNGWKVKGDCVRLPDYMMQNCKLSCELCGPETRFKYTDEDVRCPEWAQAGYCSTNTDINLKCPHSCRKYKQRAPASTPYPYPVEALHPYQYRVVLPSVTILQTTTAAPSTQPAETTKAPPNTAAPTAAPTPAPTPAPAPAPTPAPVAPAPQTAPLAGSPPESTPEEQDDNSADESTEIEAGEGGGELCDEKHSSQQ.

Positions 1–19 (MLRRPLLLVLFTVFSTLYA) are cleaved as a signal peptide. Positions 24–56 (GVSPPTNESEAEVSPGDDEGPPEPGNEPDVNWR) are disordered. The span at 32–44 (SEAEVSPGDDEGP) shows a compositional bias: acidic residues. 3 consecutive ShKT domains span residues 65–99 (CKDKGKDCESLADEGNCLKKLNYAVGNCPWTCRFC), 109–145 (CKDLAGERHCNGWKVKGDCVRLPDYMMQNCKLSCELC), and 151–186 (FKYTDEDVRCPEWAQAGYCSTNTDINLKCPHSCRKY). Cystine bridges form between C65/C99, C72/C92, C81/C96, C109/C145, C127/C142, C160/C179, and C169/C183. The span at 222 to 244 (TAAPSTQPAETTKAPPNTAAPTA) shows a compositional bias: low complexity. Residues 222–313 (TAAPSTQPAE…LCDEKHSSQQ (92 aa)) form a disordered region. Positions 245–265 (APTPAPTPAPAPAPTPAPVAP) are enriched in pro residues. The span at 280–297 (TPEEQDDNSADESTEIEA) shows a compositional bias: acidic residues.

Belongs to the NEP3 family. In terms of tissue distribution, nematocytes. In late planulae, is only expressed in a handful of nematocytes in the lower pharynx. Is absent from the tentacles and outer body wall.

Its subcellular location is the nematocyst. It is found in the secreted. In terms of biological role, probable toxin probably only used for predation. This is Nematocyst expressed protein 8 from Nematostella vectensis (Starlet sea anemone).